Reading from the N-terminus, the 501-residue chain is Type B diterpene cyclase (501 aa).

This sequence belongs to the terpene synthase family. As to quaternary structure, monomer. Mg(2+) is required as a cofactor.

The enzyme catalyses geranylgeranyl diphosphate = tuberculosinyl diphosphate. With respect to regulation, strongly inhibited by 15-aza-dihydrogeranylgeraniol and 5-isopropyl-N,N,N,2-tetramethyl-4-(piperidine-1-carbonyloxy)benzenaminium chloride (Amo-1618). Inhibited by GGPP concentrations higher than 50 uM. Catalyzes the formation of tuberculosinyl diphosphate from geranylgeranyl diphosphate (GGPP). It could also react with (14R/S)-14,15-oxidoGGPP to generate 3alpha- and 3beta-hydroxytuberculosinyl diphosphate. This Mycobacterium tuberculosis (strain ATCC 25618 / H37Rv) protein is Type B diterpene cyclase.